A 102-amino-acid chain; its full sequence is MVIGLSHYLTVSAILFTLGVFGIFLNRKNVIVILMSVELILLAVNINMVAFSSFLNDIVGQVFALFILTVAAAEAAIGLAILVVFYRNRGSIAVEDVNMMKG.

The next 3 membrane-spanning stretches (helical) occupy residues 5 to 25 (LSHY…GIFL), 31 to 51 (IVIL…MVAF), and 65 to 85 (LFIL…LVVF).

It belongs to the complex I subunit 4L family. In terms of assembly, NDH-1 is composed of 14 different subunits. Subunits NuoA, H, J, K, L, M, N constitute the membrane sector of the complex.

Its subcellular location is the cell inner membrane. The enzyme catalyses a quinone + NADH + 5 H(+)(in) = a quinol + NAD(+) + 4 H(+)(out). In terms of biological role, NDH-1 shuttles electrons from NADH, via FMN and iron-sulfur (Fe-S) centers, to quinones in the respiratory chain. The immediate electron acceptor for the enzyme in this species is believed to be ubiquinone. Couples the redox reaction to proton translocation (for every two electrons transferred, four hydrogen ions are translocated across the cytoplasmic membrane), and thus conserves the redox energy in a proton gradient. This is NADH-quinone oxidoreductase subunit K from Rhizobium leguminosarum bv. trifolii (strain WSM2304).